The sequence spans 936 residues: Lon protease homolog, mitochondrial (936 aa).

A mitochondrion-targeting transit peptide spans 1–40 (MYATRAIARRLERHAARCKGAHVARAVRGARARTTSAPRA). The segment at 65–95 (AFVSSVDGDGSTGSTGSSSSSSSSAFGDSAS) is disordered. Residues 66 to 95 (FVSSVDGDGSTGSTGSSSSSSSSAFGDSAS) show a composition bias toward low complexity. One can recognise a Lon N-terminal domain in the interval 112-352 (VLAVPLPRRP…ATLELLKKEV (241 aa)). 507-514 (GPPGVGKT) provides a ligand contact to ATP. Residues 748-932 (VTPPGVVTGL…DEVYRQALDW (185 aa)) enclose the Lon proteolytic domain. Catalysis depends on residues S838 and K881.

It belongs to the peptidase S16 family. In terms of assembly, homohexamer or homoheptamer. Organized in a ring with a central cavity.

It is found in the mitochondrion matrix. It catalyses the reaction Hydrolysis of proteins in presence of ATP.. ATP-dependent serine protease that mediates the selective degradation of misfolded, unassembled or oxidatively damaged polypeptides as well as certain short-lived regulatory proteins in the mitochondrial matrix. May also have a chaperone function in the assembly of inner membrane protein complexes. Participates in the regulation of mitochondrial gene expression and in the maintenance of the integrity of the mitochondrial genome. Binds to mitochondrial DNA in a site-specific manner. The chain is Lon protease homolog, mitochondrial from Ostreococcus lucimarinus (strain CCE9901).